The primary structure comprises 422 residues: GTPase Obg (422 aa).

The 156-residue stretch at 2–157 (AKFIDEIKLT…YLAHIVLKVM (156 aa)) folds into the Obg domain. The 168-residue stretch at 158–325 (SDVGIIGKPS…LKGKIWKILE (168 aa)) folds into the OBG-type G domain. Residues 164–171 (GKPSAGKS), 189–193 (FTTLV), 210–213 (DLPG), 279–282 (NKSD), and 306–308 (SAI) contribute to the GTP site. Residues serine 171 and threonine 191 each coordinate Mg(2+). Residues 334-420 (EEEETEENVE…ILDYEFEWDG (87 aa)) enclose the OCT domain.

Belongs to the TRAFAC class OBG-HflX-like GTPase superfamily. OBG GTPase family. Monomer. The cofactor is Mg(2+).

The protein resides in the cytoplasm. In terms of biological role, an essential GTPase which binds GTP, GDP and possibly (p)ppGpp with moderate affinity, with high nucleotide exchange rates and a fairly low GTP hydrolysis rate. Plays a role in control of the cell cycle, stress response, ribosome biogenesis and in those bacteria that undergo differentiation, in morphogenesis control. The chain is GTPase Obg from Mycoplasmopsis agalactiae (strain NCTC 10123 / CIP 59.7 / PG2) (Mycoplasma agalactiae).